The sequence spans 74 residues: uncharacterized protein (74 aa).

The tract at residues 39–74 (SSPQAPGTLKPRALVRPSPGPVQENHLSEAQFPPKL) is disordered.

This is an uncharacterized protein from Homo sapiens (Human).